The primary structure comprises 513 residues: Coiled-coil domain-containing protein 102B (513 aa).

The tract at residues 1–217 (MNLDSIHRLI…IDSLKLSEEM (217 aa)) is required for centriolar localization and for interaction with CEP250, CROCC, LRRC45 and NEK2. Residues Ser-21, Ser-22, Ser-34, Ser-135, Ser-142, Ser-194, and Ser-210 each carry the phosphoserine modification. The stretch at 72–142 (ELRLRELEEV…ELSTLKKKQS (71 aa)) forms a coiled coil. Coiled coils occupy residues 268-337 (QKIL…ESKS) and 363-513 (WDKR…LQNW). Residues Ser-401, Ser-404, and Ser-406 each carry the phosphoserine modification. The segment at 493-513 (LDEEKERNENLETELRHLQNW) is disordered.

As to quaternary structure, interacts (via N-terminus) with centriolar protein CEP250/CNAP1; the interaction results in recruitment of CCDC102B to the proximal ends of centrioles. Interacts (via N-terminus) with CROCC/rootletin and LRRC45. Interacts (via N-terminus) with serine/threonine-protein kinase NEK2; the interaction results in phosphorylation of CCDC102B. Post-translationally, phosphorylated directly or indirectly by NEK2 during mitosis which causes dissociation of CCDC102B from the centrosome and allows for centrosome separation.

The protein resides in the cytoplasm. It is found in the cytoskeleton. The protein localises to the microtubule organizing center. Its subcellular location is the centrosome. It localises to the centriole. During interphase, forms fibers at the proximal ends of centrioles to maintain centrosome cohesion. During mitosis, dissociates from the centrosome following phosphorylation to allow centrosome separation. Contributes to CROCC/rootletin filament formation. The chain is Coiled-coil domain-containing protein 102B (CCDC102B) from Homo sapiens (Human).